The primary structure comprises 699 residues: DNA ligase (699 aa).

The interval 1 to 20 (MTVQKPIESLSPAQAKREHR) is disordered. Residues 43 to 47 (DAEYD), 92 to 93 (SL), and Glu126 each bind NAD(+). Lys128 functions as the N6-AMP-lysine intermediate in the catalytic mechanism. Residues Arg149, Glu185, Lys301, and Lys325 each contribute to the NAD(+) site. The Zn(2+) site is built by Cys419, Cys422, Cys443, and Cys449. The BRCT domain maps to 621-699 (AKESPVAGKT…EEDWLKLVGE (79 aa)).

The protein belongs to the NAD-dependent DNA ligase family. LigA subfamily. Mg(2+) serves as cofactor. It depends on Mn(2+) as a cofactor.

The enzyme catalyses NAD(+) + (deoxyribonucleotide)n-3'-hydroxyl + 5'-phospho-(deoxyribonucleotide)m = (deoxyribonucleotide)n+m + AMP + beta-nicotinamide D-nucleotide.. Its function is as follows. DNA ligase that catalyzes the formation of phosphodiester linkages between 5'-phosphoryl and 3'-hydroxyl groups in double-stranded DNA using NAD as a coenzyme and as the energy source for the reaction. It is essential for DNA replication and repair of damaged DNA. In Beijerinckia indica subsp. indica (strain ATCC 9039 / DSM 1715 / NCIMB 8712), this protein is DNA ligase.